Here is a 479-residue protein sequence, read N- to C-terminus: GDP-fucose protein O-fucosyltransferase 3 (479 aa).

The Cytoplasmic portion of the chain corresponds to 1-8 (MVRIQRRK). Residues 9 to 31 (LLASCLCVTATVFLLVTLQVMVE) form a helical; Signal-anchor for type II membrane protein membrane-spanning segment. Over 32–479 (LGKFERKEFK…QEFWGLVFKD (448 aa)) the chain is Lumenal. Residues Asn110 and Asn168 are each glycosylated (N-linked (GlcNAc...) asparagine). Cys389 and Cys392 are joined by a disulfide.

This sequence belongs to the glycosyltransferase 10 family. Expressed in lung, digestive tract, gall bladder, placenta, kidney, uterus and brain. Not detected in spleen, heart, muscle, liver and pancreas.

It localises to the endoplasmic reticulum membrane. The protein localises to the golgi apparatus membrane. Its subcellular location is the golgi apparatus. It is found in the lysosome. It catalyses the reaction L-threonyl-[protein] + GDP-beta-L-fucose = 3-O-(alpha-L-fucosyl)-L-threonyl-[protein] + GDP + H(+). The catalysed reaction is L-seryl-[protein] + GDP-beta-L-fucose = 3-O-(alpha-L-fucosyl)-L-seryl-[protein] + GDP + H(+). The protein operates within protein modification; protein glycosylation. Its function is as follows. Protein O-fucosyltransferase that specifically catalyzes O-fucosylation of serine or threonine residues in EMI domains of target proteins, such as MMRN1, MMRN2 and EMID1. Attaches fucose through an O-glycosidic linkage. O-fucosylation of EMI domain-containing proteins may be required for facilitating protein folding and secretion. May also show alpha-(1,3)-fucosyltransferase activity toward the innermost N-acetyl glucosamine (GlcNAc) residue in biantennary N-glycan acceptors. However, this was tested with a library of synthetic substrates and this activity is unsure in vivo. May be involved in biosynthesis of Lewis X-carrying biantennary N-glycans that regulate neuron stem cell self-renewal during brain development. This is GDP-fucose protein O-fucosyltransferase 3 from Homo sapiens (Human).